A 268-amino-acid chain; its full sequence is Shikimate dehydrogenase (NADP(+)) (268 aa).

Residues 13–15 and threonine 60 contribute to the shikimate site; that span reads SLS. The Proton acceptor role is filled by lysine 64. NADP(+) is bound at residue glutamate 76. Shikimate contacts are provided by asparagine 85 and aspartate 100. Residues 124 to 128, 148 to 153, and isoleucine 209 contribute to the NADP(+) site; these read GAGGA and NRTMAR. Tyrosine 211 contributes to the shikimate binding site. Glycine 232 serves as a coordination point for NADP(+).

The protein belongs to the shikimate dehydrogenase family. As to quaternary structure, homodimer.

The enzyme catalyses shikimate + NADP(+) = 3-dehydroshikimate + NADPH + H(+). Its pathway is metabolic intermediate biosynthesis; chorismate biosynthesis; chorismate from D-erythrose 4-phosphate and phosphoenolpyruvate: step 4/7. Functionally, involved in the biosynthesis of the chorismate, which leads to the biosynthesis of aromatic amino acids. Catalyzes the reversible NADPH linked reduction of 3-dehydroshikimate (DHSA) to yield shikimate (SA). The protein is Shikimate dehydrogenase (NADP(+)) of Staphylococcus aureus (strain MRSA252).